Here is a 354-residue protein sequence, read N- to C-terminus: Rhodopsin (354 aa).

Residues 1–36 (MNGTEGPYFYIPMVNTTGIVRSPYEYPQYYLVNPAA) are Extracellular-facing. 2 N-linked (GlcNAc...) asparagine glycosylation sites follow: Asn2 and Asn15. The chain crosses the membrane as a helical span at residues 37–61 (YAALGAYMFFLILLGFPINFLTLYV). Residues 62-73 (TLEHKKLRTPLN) are Cytoplasmic-facing. Residues 74 to 96 (YILLNLAVADLFMVFGGFTTTMY) form a helical membrane-spanning segment. Over 97–110 (TSMHGYFVLGRLGC) the chain is Extracellular. Cys110 and Cys187 are oxidised to a cystine. A helical membrane pass occupies residues 111–133 (NLEGFFATLGGEIGLWSLVVLAI). A 'Ionic lock' involved in activated form stabilization motif is present at residues 134-136 (ERW). At 134–152 (ERWVVVCKPISNFRFGENH) the chain is on the cytoplasmic side. The chain crosses the membrane as a helical span at residues 153–173 (AIMGLAFTWIMACACAVPPLV). Residues 174 to 202 (GWSRYIPEGMQCSCGVDYYTRAEGFNNES) are Extracellular-facing. The N-linked (GlcNAc...) asparagine glycan is linked to Asn200. The chain crosses the membrane as a helical span at residues 203-224 (FVVYMFTCHFCIPLTIIGFCYG). The Cytoplasmic portion of the chain corresponds to 225–252 (RLLCAVKEAAAAQQESETTQRAEREVTR). The helical transmembrane segment at 253–274 (MVILMVVGFLVCWLPYASVAWY) threads the bilayer. Residues 275-286 (IFSNQGSQFGPL) are Extracellular-facing. The helical transmembrane segment at 287-308 (FMTIPAFFAKSSSVYNPMIYIC) threads the bilayer. Lys296 is subject to N6-(retinylidene)lysine. Residues 309–354 (MNKQFRHCMITTLCCGKNPFEEEEGASTTASKTEASSVSSSSVSPA) lie on the Cytoplasmic side of the membrane. S-palmitoyl cysteine attachment occurs at residues Cys322 and Cys323. The disordered stretch occupies residues 333 to 354 (GASTTASKTEASSVSSSSVSPA). Residues 334 to 354 (ASTTASKTEASSVSSSSVSPA) show a composition bias toward low complexity.

It belongs to the G-protein coupled receptor 1 family. Opsin subfamily. In terms of processing, phosphorylated on some or all of the serine and threonine residues present in the C-terminal region. Contains one covalently linked retinal chromophore.

It localises to the membrane. Its subcellular location is the cell projection. The protein localises to the cilium. The protein resides in the photoreceptor outer segment. In terms of biological role, photoreceptor required for image-forming vision at low light intensity. While most salt water fish species use retinal as chromophore, most freshwater fish use 3-dehydroretinal, or a mixture of retinal and 3-dehydroretinal. Light-induced isomerization of 11-cis to all-trans retinal triggers a conformational change that activates signaling via G-proteins. Subsequent receptor phosphorylation mediates displacement of the bound G-protein alpha subunit by arrestin and terminates signaling. This Salaria pavo (Peacock blenny) protein is Rhodopsin (rho).